A 67-amino-acid polypeptide reads, in one-letter code: Beta-defensin 103A (67 aa).

Positions 1–22 are cleaved as a signal peptide; that stretch reads MRIHYLLFTLLFLFLVPVPGHG. 3 disulfides stabilise this stretch: C33–C62, C40–C55, and C45–C63.

The protein belongs to the beta-defensin family.

The protein localises to the secreted. Its function is as follows. Exhibits antimicrobial activity against Gram-positive and Gram-negative bacteria. This chain is Beta-defensin 103A (DEFB103A), found in Gorilla gorilla gorilla (Western lowland gorilla).